Here is a 151-residue protein sequence, read N- to C-terminus: Putative pre-16S rRNA nuclease (151 aa).

Belongs to the YqgF nuclease family.

It localises to the cytoplasm. In terms of biological role, could be a nuclease involved in processing of the 5'-end of pre-16S rRNA. The protein is Putative pre-16S rRNA nuclease of Chlamydia pneumoniae (Chlamydophila pneumoniae).